The following is a 358-amino-acid chain: Peptide chain release factor 1 (358 aa).

Glutamine 233 carries the post-translational modification N5-methylglutamine.

Belongs to the prokaryotic/mitochondrial release factor family. In terms of processing, methylated by PrmC. Methylation increases the termination efficiency of RF1.

Its subcellular location is the cytoplasm. Peptide chain release factor 1 directs the termination of translation in response to the peptide chain termination codons UAG and UAA. In Brevibacillus brevis (strain 47 / JCM 6285 / NBRC 100599), this protein is Peptide chain release factor 1.